Consider the following 455-residue polypeptide: Tubulin alpha-1 chain (455 aa).

Residues Gln-11, Glu-75, Ser-144, Gly-148, Thr-149, Thr-183, Asn-210, and Asn-232 each coordinate GTP. Residue Glu-75 coordinates Mg(2+). Residue Glu-258 is part of the active site.

It belongs to the tubulin family. Dimer of alpha and beta chains. A typical microtubule is a hollow water-filled tube with an outer diameter of 25 nm and an inner diameter of 15 nM. Alpha-beta heterodimers associate head-to-tail to form protofilaments running lengthwise along the microtubule wall with the beta-tubulin subunit facing the microtubule plus end conferring a structural polarity. Microtubules usually have 13 protofilaments but different protofilament numbers can be found in some organisms and specialized cells. It depends on Mg(2+) as a cofactor.

It localises to the cytoplasm. It is found in the cytoskeleton. The catalysed reaction is GTP + H2O = GDP + phosphate + H(+). In terms of biological role, tubulin is the major constituent of microtubules, a cylinder consisting of laterally associated linear protofilaments composed of alpha- and beta-tubulin heterodimers. Microtubules grow by the addition of GTP-tubulin dimers to the microtubule end, where a stabilizing cap forms. Below the cap, tubulin dimers are in GDP-bound state, owing to GTPase activity of alpha-tubulin. This chain is Tubulin alpha-1 chain (nda2), found in Schizosaccharomyces pombe (strain 972 / ATCC 24843) (Fission yeast).